We begin with the raw amino-acid sequence, 382 residues long: Queuine tRNA-ribosyltransferase (382 aa).

D93 functions as the Proton acceptor in the catalytic mechanism. Residues 93 to 97 (DSGGF), D147, Q191, and G218 contribute to the substrate site. The segment at 249-255 (GVGKPED) is RNA binding. The Nucleophile role is filled by D268. The interval 273–277 (TRNAR) is RNA binding; important for wobble base 34 recognition. Zn(2+)-binding residues include C306, C308, C311, and H337.

It belongs to the queuine tRNA-ribosyltransferase family. In terms of assembly, homodimer. Within each dimer, one monomer is responsible for RNA recognition and catalysis, while the other monomer binds to the replacement base PreQ1. Requires Zn(2+) as cofactor.

It carries out the reaction 7-aminomethyl-7-carbaguanine + guanosine(34) in tRNA = 7-aminomethyl-7-carbaguanosine(34) in tRNA + guanine. The protein operates within tRNA modification; tRNA-queuosine biosynthesis. Its function is as follows. Catalyzes the base-exchange of a guanine (G) residue with the queuine precursor 7-aminomethyl-7-deazaguanine (PreQ1) at position 34 (anticodon wobble position) in tRNAs with GU(N) anticodons (tRNA-Asp, -Asn, -His and -Tyr). Catalysis occurs through a double-displacement mechanism. The nucleophile active site attacks the C1' of nucleotide 34 to detach the guanine base from the RNA, forming a covalent enzyme-RNA intermediate. The proton acceptor active site deprotonates the incoming PreQ1, allowing a nucleophilic attack on the C1' of the ribose to form the product. After dissociation, two additional enzymatic reactions on the tRNA convert PreQ1 to queuine (Q), resulting in the hypermodified nucleoside queuosine (7-(((4,5-cis-dihydroxy-2-cyclopenten-1-yl)amino)methyl)-7-deazaguanosine). This Haemophilus influenzae (strain 86-028NP) protein is Queuine tRNA-ribosyltransferase.